Here is a 589-residue protein sequence, read N- to C-terminus: Aspartate--tRNA(Asp/Asn) ligase (589 aa).

An L-aspartate-binding site is contributed by Glu175. Positions 199–202 are aspartate; it reads QQLK. Residue Arg221 participates in L-aspartate binding. ATP is bound by residues 221–223 and Gln230; that span reads RDE. His451 lines the L-aspartate pocket. Glu485 contacts ATP. Arg492 provides a ligand contact to L-aspartate. 537 to 540 contacts ATP; sequence GIDR.

This sequence belongs to the class-II aminoacyl-tRNA synthetase family. Type 1 subfamily. Homodimer.

It is found in the cytoplasm. The enzyme catalyses tRNA(Asx) + L-aspartate + ATP = L-aspartyl-tRNA(Asx) + AMP + diphosphate. In terms of biological role, aspartyl-tRNA synthetase with relaxed tRNA specificity since it is able to aspartylate not only its cognate tRNA(Asp) but also tRNA(Asn). Reaction proceeds in two steps: L-aspartate is first activated by ATP to form Asp-AMP and then transferred to the acceptor end of tRNA(Asp/Asn). The protein is Aspartate--tRNA(Asp/Asn) ligase of Roseiflexus sp. (strain RS-1).